Reading from the N-terminus, the 1385-residue chain is Probable serine/threonine-protein kinase DDB_G0268876 (1385 aa).

The Protein kinase domain maps to 758 to 1008 (LELTKEIGRG…QQIITYLENL (251 aa)). ATP contacts are provided by residues 764-772 (IGRGVSGVV) and K785. The Proton acceptor role is filled by D878. 3 disordered regions span residues 1040 to 1074 (GGNS…ENKI), 1091 to 1266 (EVSK…SVGG), and 1287 to 1339 (ISSS…NNNN). A compositionally biased stretch (polar residues) spans 1055–1073 (VSGSNNNESSTAVSLNENK). Residues 1107 to 1144 (SSSTSSSPSTLSAPQSPVGSTSPMGSTSTSPISNNNNR) are compositionally biased toward low complexity. Positions 1145–1162 (PTHDHQQPHQVKWERIVP) are enriched in basic and acidic residues. 3 stretches are compositionally biased toward low complexity: residues 1189-1232 (NNNN…SSGI), 1242-1266 (FLSS…SVGG), and 1295-1339 (NNNN…NNNN).

Belongs to the protein kinase superfamily. TKL Ser/Thr protein kinase family.

It carries out the reaction L-seryl-[protein] + ATP = O-phospho-L-seryl-[protein] + ADP + H(+). The enzyme catalyses L-threonyl-[protein] + ATP = O-phospho-L-threonyl-[protein] + ADP + H(+). The protein is Probable serine/threonine-protein kinase DDB_G0268876 of Dictyostelium discoideum (Social amoeba).